We begin with the raw amino-acid sequence, 204 residues long: 3-isopropylmalate dehydratase small subunit (204 aa).

This sequence belongs to the LeuD family. LeuD type 1 subfamily. As to quaternary structure, heterodimer of LeuC and LeuD.

It catalyses the reaction (2R,3S)-3-isopropylmalate = (2S)-2-isopropylmalate. It participates in amino-acid biosynthesis; L-leucine biosynthesis; L-leucine from 3-methyl-2-oxobutanoate: step 2/4. Its function is as follows. Catalyzes the isomerization between 2-isopropylmalate and 3-isopropylmalate, via the formation of 2-isopropylmaleate. The sequence is that of 3-isopropylmalate dehydratase small subunit from Clavibacter michiganensis subsp. michiganensis (strain NCPPB 382).